Consider the following 103-residue polypeptide: MLMNDKIRIRLKAYDHKLLDQSAADIVDTARRTGAKVVGPIPLPTRINKYCVLRSPHVDKKSREQFEVRTHKRLLDILEPTQQTVDALMKLDLSPGVDVEIKV.

Belongs to the universal ribosomal protein uS10 family. As to quaternary structure, part of the 30S ribosomal subunit.

Its function is as follows. Involved in the binding of tRNA to the ribosomes. The chain is Small ribosomal subunit protein uS10 from Desulfatibacillum aliphaticivorans.